A 735-amino-acid polypeptide reads, in one-letter code: Photosystem I P700 chlorophyll a apoprotein A2 (735 aa).

A run of 8 helical transmembrane segments spans residues 46 to 69 (IFAS…FHVA), 135 to 158 (LYTG…LHLQ), 175 to 199 (LNHH…HVAI), 274 to 292 (IAHH…GHMY), 331 to 354 (IHFQ…QHMY), 370 to 396 (AALY…IFFI), 418 to 440 (AIIS…PYVH), and 518 to 536 (FLVH…LILV). Residues C560 and C569 each coordinate [4Fe-4S] cluster. A run of 2 helical transmembrane segments spans residues 576–597 (AFYL…YWHW) and 644–666 (LSVW…MFLI). Residues H655, M663, and Y671 each contribute to the chlorophyll a site. W672 is a binding site for phylloquinone. A helical transmembrane segment spans residues 708–728 (LVGLAHFSVGYIFTYAAFLIA).

Belongs to the PsaA/PsaB family. In terms of assembly, the PsaA/B heterodimer binds the P700 chlorophyll special pair and subsequent electron acceptors. PSI consists of a core antenna complex that captures photons, and an electron transfer chain that converts photonic excitation into a charge separation. The eukaryotic PSI reaction center is composed of at least 11 subunits. The cofactor is P700 is a chlorophyll a/chlorophyll a' dimer, A0 is one or more chlorophyll a, A1 is one or both phylloquinones and FX is a shared 4Fe-4S iron-sulfur center..

It is found in the plastid. The protein resides in the chloroplast thylakoid membrane. It catalyses the reaction reduced [plastocyanin] + hnu + oxidized [2Fe-2S]-[ferredoxin] = oxidized [plastocyanin] + reduced [2Fe-2S]-[ferredoxin]. PsaA and PsaB bind P700, the primary electron donor of photosystem I (PSI), as well as the electron acceptors A0, A1 and FX. PSI is a plastocyanin-ferredoxin oxidoreductase, converting photonic excitation into a charge separation, which transfers an electron from the donor P700 chlorophyll pair to the spectroscopically characterized acceptors A0, A1, FX, FA and FB in turn. Oxidized P700 is reduced on the lumenal side of the thylakoid membrane by plastocyanin. This Zea mays (Maize) protein is Photosystem I P700 chlorophyll a apoprotein A2.